Reading from the N-terminus, the 243-residue chain is Clathrin light chain A (243 aa).

A Blocked amino end (Met) modification is found at Met-1. Disordered stretches follow at residues 1–22 (MAEL…GVAG) and 49–87 (ILDG…GPTD). Residues 10–20 (PAGGPALGNGV) are compositionally biased toward gly residues. Residues 95–157 (VDRLQSEPES…QLQKTKANNR (63 aa)) are involved in binding clathrin heavy chain. Ser-100 and Ser-201 each carry phosphoserine. Lys-218 is subject to N6-acetyllysine. The residue at position 231 (Ser-231) is a Phosphoserine. Lys-237 is subject to N6-acetyllysine.

It belongs to the clathrin light chain family. In terms of assembly, clathrin coats are formed from molecules containing 3 heavy chains and 3 light chains. Interacts with CALY; the interaction stimulates clathrin self-assembly and clathrin-mediated endocytosis. Interacts with CKAP5 and TACC3 forming the TACC3/ch-TOG/clathrin complex located at spindle inter-microtubules bridges; the complex implicates clathrin triskelions.

It localises to the cytoplasmic vesicle membrane. The protein resides in the membrane. Its subcellular location is the coated pit. It is found in the cytoplasm. The protein localises to the cytoskeleton. It localises to the spindle. Clathrin is the major protein of the polyhedral coat of coated pits and vesicles. Acts as a component of the TACC3/ch-TOG/clathrin complex proposed to contribute to stabilization of kinetochore fibers of the mitotic spindle by acting as inter-microtubule bridge. This Bos taurus (Bovine) protein is Clathrin light chain A (CLTA).